Here is a 390-residue protein sequence, read N- to C-terminus: 4-hydroxy-3-methylbut-2-en-1-yl diphosphate synthase (flavodoxin) (390 aa).

[4Fe-4S] cluster-binding residues include C281, C284, C316, and E323.

Belongs to the IspG family. The cofactor is [4Fe-4S] cluster.

It carries out the reaction (2E)-4-hydroxy-3-methylbut-2-enyl diphosphate + oxidized [flavodoxin] + H2O + 2 H(+) = 2-C-methyl-D-erythritol 2,4-cyclic diphosphate + reduced [flavodoxin]. It participates in isoprenoid biosynthesis; isopentenyl diphosphate biosynthesis via DXP pathway; isopentenyl diphosphate from 1-deoxy-D-xylulose 5-phosphate: step 5/6. Its function is as follows. Converts 2C-methyl-D-erythritol 2,4-cyclodiphosphate (ME-2,4cPP) into 1-hydroxy-2-methyl-2-(E)-butenyl 4-diphosphate. In Salinispora arenicola (strain CNS-205), this protein is 4-hydroxy-3-methylbut-2-en-1-yl diphosphate synthase (flavodoxin).